Consider the following 340-residue polypeptide: Porphobilinogen deaminase (340 aa).

At Cys-258 the chain carries S-(dipyrrolylmethanemethyl)cysteine.

It belongs to the HMBS family. Dipyrromethane serves as cofactor.

The catalysed reaction is 4 porphobilinogen + H2O = hydroxymethylbilane + 4 NH4(+). It functions in the pathway porphyrin-containing compound metabolism; protoporphyrin-IX biosynthesis; coproporphyrinogen-III from 5-aminolevulinate: step 2/4. In terms of biological role, tetrapolymerization of the monopyrrole PBG into the hydroxymethylbilane pre-uroporphyrinogen in several discrete steps. The chain is Porphobilinogen deaminase (HEM3) from Candida albicans (strain SC5314 / ATCC MYA-2876) (Yeast).